Here is a 181-residue protein sequence, read N- to C-terminus: NADH-quinone oxidoreductase subunit I (181 aa).

2 4Fe-4S ferredoxin-type domains span residues 52–81 (TRDS…LKKG) and 91–120 (KFFR…LTPD). [4Fe-4S] cluster is bound by residues Cys61, Cys64, Cys67, Cys71, Cys100, Cys103, Cys106, and Cys110.

It belongs to the complex I 23 kDa subunit family. As to quaternary structure, NDH-1 is composed of 13 different subunits. Subunits NuoA, H, J, K, L, M, N constitute the membrane sector of the complex. [4Fe-4S] cluster is required as a cofactor.

It is found in the cell inner membrane. It carries out the reaction a quinone + NADH + 5 H(+)(in) = a quinol + NAD(+) + 4 H(+)(out). Functionally, NDH-1 shuttles electrons from NADH, via FMN and iron-sulfur (Fe-S) centers, to quinones in the respiratory chain. The immediate electron acceptor for the enzyme in this species is believed to be ubiquinone. Couples the redox reaction to proton translocation (for every two electrons transferred, four hydrogen ions are translocated across the cytoplasmic membrane), and thus conserves the redox energy in a proton gradient. This Blochmanniella pennsylvanica (strain BPEN) protein is NADH-quinone oxidoreductase subunit I.